Consider the following 425-residue polypeptide: Serine--tRNA ligase (425 aa).

An L-serine-binding site is contributed by 230–232; the sequence is TAE. 261–263 is an ATP binding site; it reads RAE. Residue Glu284 coordinates L-serine. Residue 348–351 coordinates ATP; the sequence is EISS. Residue Ser384 participates in L-serine binding.

The protein belongs to the class-II aminoacyl-tRNA synthetase family. Type-1 seryl-tRNA synthetase subfamily. Homodimer. The tRNA molecule binds across the dimer.

It is found in the cytoplasm. It carries out the reaction tRNA(Ser) + L-serine + ATP = L-seryl-tRNA(Ser) + AMP + diphosphate + H(+). The catalysed reaction is tRNA(Sec) + L-serine + ATP = L-seryl-tRNA(Sec) + AMP + diphosphate + H(+). Its pathway is aminoacyl-tRNA biosynthesis; selenocysteinyl-tRNA(Sec) biosynthesis; L-seryl-tRNA(Sec) from L-serine and tRNA(Sec): step 1/1. Functionally, catalyzes the attachment of serine to tRNA(Ser). Is also able to aminoacylate tRNA(Sec) with serine, to form the misacylated tRNA L-seryl-tRNA(Sec), which will be further converted into selenocysteinyl-tRNA(Sec). The protein is Serine--tRNA ligase of Zymomonas mobilis subsp. mobilis (strain ATCC 31821 / ZM4 / CP4).